The primary structure comprises 250 residues: Acidic leucine-rich nuclear phosphoprotein 32 family member E (250 aa).

The residue at position 8 (S8) is a Phosphoserine. LRR repeat units follow at residues 43–64 (ELEF…PSLP), 65–87 (KLRK…AEKC), and 89–110 (NLTY…EALQ). The 39-residue stretch at 123–161 (CEITTLEDYRESIFELLPQVTYLDGFDAEDNEAPDSEAD) folds into the LRRCT domain. 3 stretches are compositionally biased toward acidic residues: residues 149-171 (DAED…DGDE), 178-191 (EYEE…EGSE), and 205-227 (IQDE…EEEA). Residues 149-250 (DAEDNEAPDS…EGEDDDEDDD (102 aa)) are disordered. Residues 194–247 (EVGLSYLMKEDIQDEEDDDDYVEEEEEEGGEEEADVRGEKRKREAEDEGEDDDE) are ZID domain. The segment covering 228 to 238 (DVRGEKRKREA) has biased composition (basic and acidic residues). Residues 239 to 250 (EDEGEDDDEDDD) show a composition bias toward acidic residues.

Belongs to the ANP32 family. In terms of assembly, component of a SWR1-like complex. Interacts with H2A.Z/H2AZ1. In terms of processing, phosphorylated. The phosphorylation is nuclear localization signal (NLS)-dependent.

The protein resides in the cytoplasm. It localises to the nucleus. Histone chaperone that specifically mediates the genome-wide removal of histone H2A.Z/H2AZ1 from the nucleosome: removes H2A.Z/H2AZ1 from its normal sites of deposition, especially from enhancer and insulator regions. Not involved in deposition of H2A.Z/H2AZ1 in the nucleosome. May stabilize the evicted H2A.Z/H2AZ1-H2B dimer, thus shifting the equilibrium towards dissociation and the off-chromatin state. Inhibits activity of protein phosphatase 2A (PP2A). Does not inhibit protein phosphatase 1. May play a role in cerebellar development and synaptogenesis. The chain is Acidic leucine-rich nuclear phosphoprotein 32 family member E (anp32e) from Danio rerio (Zebrafish).